Reading from the N-terminus, the 342-residue chain is Glycerol-1-phosphate dehydrogenase [NAD(P)+] (342 aa).

Residues 84–88 (GRPID) and 106–109 (TSAS) contribute to the NAD(+) site. Residue D111 participates in substrate binding. Residue S115 participates in NAD(+) binding. Position 160 (D160) interacts with substrate. Residues D160 and H241 each coordinate Zn(2+). Position 245 (H245) interacts with substrate. A Zn(2+)-binding site is contributed by H260.

Belongs to the glycerol-1-phosphate dehydrogenase family. As to quaternary structure, homodimer. It depends on Zn(2+) as a cofactor.

It is found in the cytoplasm. It carries out the reaction sn-glycerol 1-phosphate + NAD(+) = dihydroxyacetone phosphate + NADH + H(+). The enzyme catalyses sn-glycerol 1-phosphate + NADP(+) = dihydroxyacetone phosphate + NADPH + H(+). Its pathway is membrane lipid metabolism; glycerophospholipid metabolism. Functionally, catalyzes the NAD(P)H-dependent reduction of dihydroxyacetonephosphate (DHAP or glycerone phosphate) to glycerol 1-phosphate (G1P). The G1P thus generated is used as the glycerophosphate backbone of phospholipids in the cellular membranes of Archaea. In Pyrobaculum arsenaticum (strain DSM 13514 / JCM 11321 / PZ6), this protein is Glycerol-1-phosphate dehydrogenase [NAD(P)+].